Reading from the N-terminus, the 121-residue chain is NADH-ubiquinone oxidoreductase chain 3 (121 aa).

The next 3 membrane-spanning stretches (helical) occupy residues 11 to 31 (ILTFFAISFSISTLILALSYF), 63 to 83 (FYLVAILFLIFDLEISFLFPW), and 90 to 110 (LSIFGFWSMIVFLIILTLGFI).

It belongs to the complex I subunit 3 family.

The protein resides in the mitochondrion membrane. It catalyses the reaction a ubiquinone + NADH + 5 H(+)(in) = a ubiquinol + NAD(+) + 4 H(+)(out). In terms of biological role, core subunit of the mitochondrial membrane respiratory chain NADH dehydrogenase (Complex I) that is believed to belong to the minimal assembly required for catalysis. Complex I functions in the transfer of electrons from NADH to the respiratory chain. The immediate electron acceptor for the enzyme is believed to be ubiquinone. The sequence is that of NADH-ubiquinone oxidoreductase chain 3 (NAD3) from Porphyra purpurea (Red seaweed).